The following is a 151-amino-acid chain: Putative membrane protein ORF10 (151 aa).

Transmembrane regions (helical) follow at residues 7–23 and 107–123; these read LCLAFGVTLIVIVGVVV and GLVAAFNGFWLSFIIMY.

It localises to the membrane. The polypeptide is Putative membrane protein ORF10 (ORF10) (Ictalurid herpesvirus 1 (strain Auburn) (IcHV-1)).